The following is a 519-amino-acid chain: Glutamate--cysteine ligase (519 aa).

It belongs to the glutamate--cysteine ligase type 1 family. Type 1 subfamily.

It carries out the reaction L-cysteine + L-glutamate + ATP = gamma-L-glutamyl-L-cysteine + ADP + phosphate + H(+). Its pathway is sulfur metabolism; glutathione biosynthesis; glutathione from L-cysteine and L-glutamate: step 1/2. This Photorhabdus laumondii subsp. laumondii (strain DSM 15139 / CIP 105565 / TT01) (Photorhabdus luminescens subsp. laumondii) protein is Glutamate--cysteine ligase.